Consider the following 383-residue polypeptide: Probable purine permease 16 (383 aa).

10 helical membrane passes run 30 to 50 (ISVF…MLLL), 72 to 92 (WTQA…FFIL), 113 to 133 (VLSL…LYAL), 138 to 158 (VGWG…SAFI), 166 to 186 (WIII…PAFA), 203 to 223 (LILI…QLGF), 247 to 267 (ICVS…SGEF), 297 to 317 (VWAV…ADVV), 322 to 342 (SPVV…EFGW), and 346 to 363 (GALL…YSLH).

The protein belongs to the purine permeases (TC 2.A.7.14) family.

It localises to the membrane. In Arabidopsis thaliana (Mouse-ear cress), this protein is Probable purine permease 16 (PUP16).